The chain runs to 91 residues: MTKGTQAFGKKHVKSHTLCKRCGKSSFHIQKKRCASCGYQDAKKRTYNWGAKSIRRRTTGTGRTRHLRDVNARFRNGFRGTTPKPRAQPTN.

Zn(2+)-binding residues include Cys-19, Cys-22, Cys-34, and Cys-37. Residues 19–37 (CKRCGKSSFHIQKKRCASC) form a C4-type zinc finger.

Belongs to the eukaryotic ribosomal protein eL37 family. Requires Zn(2+) as cofactor.

Functionally, binds to the 23S rRNA. This Caenorhabditis elegans protein is Large ribosomal subunit protein eL37.